The sequence spans 350 residues: Ribosomal RNA large subunit methyltransferase M (350 aa).

Residues serine 184, 217–220, aspartate 236, aspartate 256, and aspartate 272 each bind S-adenosyl-L-methionine; that span reads APGG. Residue lysine 301 is the Proton acceptor of the active site.

Belongs to the class I-like SAM-binding methyltransferase superfamily. RNA methyltransferase RlmE family. RlmM subfamily. As to quaternary structure, monomer.

Its subcellular location is the cytoplasm. It carries out the reaction cytidine(2498) in 23S rRNA + S-adenosyl-L-methionine = 2'-O-methylcytidine(2498) in 23S rRNA + S-adenosyl-L-homocysteine + H(+). In terms of biological role, catalyzes the 2'-O-methylation at nucleotide C2498 in 23S rRNA. In Marinomonas sp. (strain MWYL1), this protein is Ribosomal RNA large subunit methyltransferase M.